Consider the following 721-residue polypeptide: Kinesin-like protein KIF2C (721 aa).

Residues 1-250 (MESLHARLFP…CSPLTVTDPI (250 aa)) form a globular region. A phosphoserine mark is found at serine 3 and serine 19. Position 92 is a phosphoserine; by AURKB (serine 92). Positions 95–98 (SKIP) match the Microtubule tip localization signal motif. Phosphoserine occurs at positions 106, 108, 112, 162, 171, 183, and 188. Residues 164 to 188 (EAEEQAHSTRSTSSANPGNSVRRKS) are disordered. Over residues 171 to 182 (STRSTSSANPGN) the composition is skewed to polar residues. The interval 203-234 (EKRAQNSELRIKRAQEYDSSFPNWEFARMIKE) is negative regulator of microtubule-binding. The region spanning 254–584 (RICVCVRKRP…LRYADRVKEL (331 aa)) is the Kinesin motor domain. ATP is bound by residues arginine 260 and 344–351 (GQTGSGKT). Phosphoserine occurs at positions 515 and 626. Residues 614 to 652 (GNEEEELSSQMSSFNEAMTQIRELEERALEELREIIQQG) adopt a coiled-coil conformation.

It belongs to the TRAFAC class myosin-kinesin ATPase superfamily. Kinesin family. MCAK/KIF2 subfamily. Interacts with CENPH. Interacts with MTUS2/TIP150; the interaction is direct. Interacts with MAPRE1; the interaction is direct, regulated by phosphorylation and is probably required for targeting to growing microtubule plus ends. Interacts with KIF18B at microtubule tips; this interaction increases the affinity of both partners for microtubule plus ends and is required for robust microtubule depolymerization. Phosphorylation by AURKA or AURKB strongly reduces KIF18B-binding. In terms of processing, phosphorylation by AURKB, regulates association with centromeres and kinetochores and the microtubule depolymerization activity. Ubiquitinated.

The protein resides in the cytoplasm. It localises to the cytoskeleton. The protein localises to the nucleus. It is found in the chromosome. Its subcellular location is the centromere. The protein resides in the kinetochore. Functionally, in complex with KIF18B, constitutes the major microtubule plus-end depolymerizing activity in mitotic cells. Regulates the turnover of microtubules at the kinetochore and functions in chromosome segregation during mitosis. Plays a role in chromosome congression and is required for the lateral to end-on conversion of the chromosome-microtubule attachment. This is Kinesin-like protein KIF2C (Kif2c) from Mus musculus (Mouse).